The primary structure comprises 89 residues: Small ribosomal subunit protein uS15 (89 aa).

Belongs to the universal ribosomal protein uS15 family. In terms of assembly, part of the 30S ribosomal subunit. Forms a bridge to the 50S subunit in the 70S ribosome, contacting the 23S rRNA.

One of the primary rRNA binding proteins, it binds directly to 16S rRNA where it helps nucleate assembly of the platform of the 30S subunit by binding and bridging several RNA helices of the 16S rRNA. Its function is as follows. Forms an intersubunit bridge (bridge B4) with the 23S rRNA of the 50S subunit in the ribosome. This Lacticaseibacillus casei (strain BL23) (Lactobacillus casei) protein is Small ribosomal subunit protein uS15.